Here is a 399-residue protein sequence, read N- to C-terminus: Tryptophan synthase beta chain (399 aa).

K92 is subject to N6-(pyridoxal phosphate)lysine.

It belongs to the TrpB family. In terms of assembly, tetramer of two alpha and two beta chains. Pyridoxal 5'-phosphate serves as cofactor.

It carries out the reaction (1S,2R)-1-C-(indol-3-yl)glycerol 3-phosphate + L-serine = D-glyceraldehyde 3-phosphate + L-tryptophan + H2O. Its pathway is amino-acid biosynthesis; L-tryptophan biosynthesis; L-tryptophan from chorismate: step 5/5. Functionally, the beta subunit is responsible for the synthesis of L-tryptophan from indole and L-serine. This is Tryptophan synthase beta chain from Nitrosomonas eutropha (strain DSM 101675 / C91 / Nm57).